We begin with the raw amino-acid sequence, 332 residues long: Cinnamoyl-CoA reductase 2 (332 aa).

Residues 12–18, Arg-37, Lys-43, 63–64, 83–85, Tyr-156, Lys-160, 183–186, and Ser-198 each bind NADP(+); these read GAGGYIA, DL, TAS, and PVLV. Cys-149 and Cys-157 form a disulfide bridge. The active-site Proton donor is Lys-160.

The protein belongs to the NAD(P)-dependent epimerase/dehydratase family. Dihydroflavonol-4-reductase subfamily. In terms of tissue distribution, expressed at low levels in leaves, stems and flowers.

The enzyme catalyses (E)-cinnamaldehyde + NADP(+) + CoA = (E)-cinnamoyl-CoA + NADPH + H(+). The protein operates within aromatic compound metabolism; phenylpropanoid biosynthesis. Cinnamoyl-CoA reductase probably involved in the formation of phenolic compounds associated with the hypersensitive response. Seems not to be involved in lignin biosynthesis. The chain is Cinnamoyl-CoA reductase 2 (CCR2) from Arabidopsis thaliana (Mouse-ear cress).